Reading from the N-terminus, the 972-residue chain is Nuclear factor NF-kappa-B p105 subunit (972 aa).

The 208-residue stretch at 39–246 (ADGPYLQILE…DAIYDSKAPN (208 aa)) folds into the RHD domain. At C61 the chain carries S-nitrosocysteine; alternate. C61 carries the S-(15-deoxy-Delta12,14-prostaglandin J2-9-yl)cysteine; alternate lipid modification. K325 participates in a covalent cross-link: Glycyl lysine isopeptide (Lys-Gly) (interchain with G-Cter in SUMO2). S337 is subject to Phosphoserine; by PKA. The Nuclear localization signal motif lies at 360–365 (QRKRQK). Residues 372 to 394 (DSFGGGSGAGAGGGGMFGSGGGG) form a GRR region. The segment at 425–473 (KSNAGMKHGTIDTPSKNDSEGCGKNVDREAVNLSGKVTEPTEQDKESSM) is disordered. An N6-acetyllysine; by EP300 mark is found at K431 and K440. Residues 435-972 (IDTPSKNDSE…GQEGPIEGKI (538 aa)) are interaction with CFLAR. A compositionally biased stretch (basic and acidic residues) spans 439-454 (SKNDSEGCGKNVDREA). ANK repeat units follow at residues 539 to 568 (NGDS…GLIS), 578 to 607 (LYQT…DLSL), 611 to 640 (LGNS…AALL), 647 to 676 (EGLN…DVNA), 681 to 711 (SGRT…HVDS), and 715 to 744 (DGTT…DPLV). The segment at 647–681 (EGLNAIHIAVMSNSMPCLLLLVAAGADVNAQERKS) is essential for interaction with HIF1AN. N675 bears the (3S)-3-hydroxyasparagine; by HIF1AN mark. S756 is modified (phosphoserine). The stretch at 768–798 (PGTTPLDMATNWQVFDILNGKPYEPEFTSDD) is one ANK 7 repeat. Residues 814–889 (LQLYKLLEIP…EAIEVIQAAF (76 aa)) enclose the Death domain. The segment at 894-926 (TAAPSPGKGAPQTLSLPLSSASTRSPVDEVRDD) is disordered. Over residues 905 to 918 (QTLSLPLSSASTRS) the composition is skewed to polar residues. Residues S908 and S912 each carry the phosphoserine; by GSK3-beta; in vitro modification. S927 is modified (phosphoserine). 2 positions are modified to phosphoserine; by IKKB: S931 and S936. The residue at position 941 (S941) is a Phosphoserine. At T947 the chain carries Phosphothreonine.

Component of the NF-kappa-B p65-p50 complex. Homodimer; component of the NF-kappa-B p50-p50 complex. Component of the NF-kappa-B p105-p50 complex. Component of the NF-kappa-B p50-c-Rel complex. Component of a complex consisting of the NF-kappa-B p50-p50 homodimer and BCL3. Also interacts with MAP3K8. NF-kappa-B p50 subunit interacts with NCOA3 coactivator, which may coactivate NF-kappa-B dependent expression via its histone acetyltransferase activity. Interacts with TSC22D3; this interaction prevents nuclear translocation and DNA-binding. Interacts with SPAG9 and UNC5CL. NFKB1/p105 interacts with CFLAR; the interaction inhibits p105 processing into p50. NFKB1/p105 forms a ternary complex with MAP3K8 and TNIP2. Interacts with GSK3B; the interaction prevents processing of p105 to p50. NFKB1/p50 interacts with NFKBIE. NFKB1/p50 interacts with NFKBIZ. Nuclear factor NF-kappa-B p50 subunit interacts with NFKBID. Directly interacts with MEN1. Interacts with HIF1AN. Interacts with FEM1A; interaction is direct. In terms of processing, generation of the NF-kappa-B p50 (Nuclear factor NF-kappa-B p50 subunit) transcription factor takes place both cotranslationally and post-translationally via non-mutually exclusive mechanisms. A cotranslational processing allows the production of both p50 and p105 (Nuclear factor NF-kappa-B p105 subunit) from a single NFKB1 mRNA. While translation occurs, the particular unfolded structure after the GRR repeat region acts as a substrate for the proteasome, promoting degradation of the C-terminus. The GRR acts as a proteasomal 'stop signal', protecting the region upstream of the GRR from degradation and promoting generation of p50. It is unclear if limited proteasome degradation during cotranslational processing depends on ubiquitination. NF-kappa-B p50 is also generated post-translationally following ubiquitination by the KPC complex, leading to limited processing by the proteasome downstream of the GRR region, thereby generating p50. Phosphorylation at the C-terminus by IKBKB/IKKB acts as a signal for ubiquitination and promotes either complete degradation or processing to generate the NF-kappa-B p50 (Nuclear factor NF-kappa-B p50 subunit). Phosphorylation at Ser-908 and Ser-912 primes p105 for proteolytic processing in response to TNF-alpha stimulation. Phosphorylation at Ser-927, Ser-931 and Ser-936 are required for BTRC/BTRCP-mediated ubiquitination and proteolysis. Phosphorylation at Ser-931 is also required for ubiquitination by the KPC complex and limited processing to generate NF-kappa-B p50 (Nuclear factor NF-kappa-B p50 subunit). Post-translationally, polyubiquitinated at multiple Lys residues in the C-terminus. Polyubiquitinated by the SCF(FBXW11) and SCF(BTRC) complexes following phosphorylation at Ser-923, Ser-927, Ser-931 and Ser-936, leading to its complete degradation. In contrast, polyubiquitination by the KPC complex following phosphorylation at Ser-931 leads to limited proteosomal processing and generation of the active NF-kappa-B p50 (Nuclear factor NF-kappa-B p50 subunit). In terms of processing, S-nitrosylation of Cys-61 affects DNA binding. The covalent modification of cysteine by 15-deoxy-Delta12,14-prostaglandin-J2 is autocatalytic and reversible. It may occur as an alternative to other cysteine modifications, such as S-nitrosylation and S-palmitoylation.

It is found in the cytoplasm. It localises to the nucleus. NF-kappa-B is a pleiotropic transcription factor present in almost all cell types and is the endpoint of a series of signal transduction events that are initiated by a vast array of stimuli related to many biological processes such as inflammation, immunity, differentiation, cell growth, tumorigenesis and apoptosis. NF-kappa-B is a homo- or heterodimeric complex formed by the Rel-like domain-containing proteins RELA/p65, RELB, NFKB1/p105, NFKB1/p50, REL and NFKB2/p52 and the heterodimeric p65-p50 complex appears to be most abundant one. The dimers bind at kappa-B sites in the DNA of their target genes and the individual dimers have distinct preferences for different kappa-B sites that they can bind with distinguishable affinity and specificity. Different dimer combinations act as transcriptional activators or repressors, respectively. NF-kappa-B is controlled by various mechanisms of post-translational modification and subcellular compartmentalization as well as by interactions with other cofactors or corepressors. NF-kappa-B complexes are held in the cytoplasm in an inactive state complexed with members of the NF-kappa-B inhibitor (I-kappa-B) family. In a conventional activation pathway, I-kappa-B is phosphorylated by I-kappa-B kinases (IKKs) in response to different activators, subsequently degraded thus liberating the active NF-kappa-B complex which translocates to the nucleus. NF-kappa-B heterodimeric p65-p50 and RelB-p50 complexes are transcriptional activators. The NF-kappa-B p50-p50 homodimer is a transcriptional repressor, but can act as a transcriptional activator when associated with BCL3. NFKB1 appears to have dual functions such as cytoplasmic retention of attached NF-kappa-B proteins by p105 and generation of p50 by a cotranslational processing. The proteasome-mediated process ensures the production of both p50 and p105 and preserves their independent function, although processing of NFKB1/p105 also appears to occur post-translationally. p50 binds to the kappa-B consensus sequence 5'-GGRNNYYCC-3', located in the enhancer region of genes involved in immune response and acute phase reactions. In a complex with MAP3K8, NFKB1/p105 represses MAP3K8-induced MAPK signaling; active MAP3K8 is released by proteasome-dependent degradation of NFKB1/p105. Functionally, P105 is the precursor of the active p50 subunit (Nuclear factor NF-kappa-B p50 subunit) of the nuclear factor NF-kappa-B. Acts as a cytoplasmic retention of attached NF-kappa-B proteins by p105. Its function is as follows. Constitutes the active form, which associates with RELA/p65 to form the NF-kappa-B p65-p50 complex to form a transcription factor. Together with RELA/p65, binds to the kappa-B consensus sequence 5'-GGRNNYYCC-3', located in the enhancer region of genes involved in immune response and acute phase reactions. This chain is Nuclear factor NF-kappa-B p105 subunit (NFKB1), found in Canis lupus familiaris (Dog).